The chain runs to 159 residues: 17 kDa surface antigen (159 aa).

A signal peptide spans 1 to 19 (MKLLSKIMIIALATSMLQA). Cys-20 carries N-palmitoyl cysteine lipidation. The S-diacylglycerol cysteine moiety is linked to residue Cys-20.

Belongs to the rickettsiale 17 kDa surface antigen family.

The protein localises to the cell outer membrane. This chain is 17 kDa surface antigen (omp), found in Rickettsia japonica (strain ATCC VR-1363 / YH).